The chain runs to 130 residues: Large ribosomal subunit protein bL20c (130 aa).

It belongs to the bacterial ribosomal protein bL20 family.

It is found in the plastid. It localises to the chloroplast. Binds directly to 23S ribosomal RNA and is necessary for the in vitro assembly process of the 50S ribosomal subunit. It is not involved in the protein synthesizing functions of that subunit. The protein is Large ribosomal subunit protein bL20c of Fagopyrum esculentum subsp. ancestrale (Wild buckwheat).